Here is a 75-residue protein sequence, read N- to C-terminus: U6-lycotoxin-Ls1c (75 aa).

The signal sequence occupies residues 1–21 (MKLLLFTALVLVVISLIEVEA). The propeptide occupies 22-25 (ENER). 4 disulfides stabilise this stretch: Cys27–Cys42, Cys34–Cys47, Cys41–Cys65, and Cys49–Cys63.

This sequence belongs to the neurotoxin 19 (CSTX) family. 06 (U6-Lctx) subfamily. In terms of tissue distribution, expressed by the venom gland.

Its subcellular location is the secreted. The chain is U6-lycotoxin-Ls1c from Lycosa singoriensis (Wolf spider).